Consider the following 211-residue polypeptide: LexA repressor (211 aa).

Residues 27 to 47 (QTEIARAFGFKGVRAAQYHLE) constitute a DNA-binding region (H-T-H motif). Residues Ser-131 and Lys-168 each act as for autocatalytic cleavage activity in the active site.

Belongs to the peptidase S24 family. As to quaternary structure, homodimer.

The catalysed reaction is Hydrolysis of Ala-|-Gly bond in repressor LexA.. Represses a number of genes involved in the response to DNA damage (SOS response), including recA and lexA. In the presence of single-stranded DNA, RecA interacts with LexA causing an autocatalytic cleavage which disrupts the DNA-binding part of LexA, leading to derepression of the SOS regulon and eventually DNA repair. The sequence is that of LexA repressor from Stenotrophomonas maltophilia (strain R551-3).